Consider the following 714-residue polypeptide: GATA zinc finger domain-containing protein 10 (714 aa).

Disordered stretches follow at residues 28–97 (YIQQ…NKQI), 115–180 (TMPH…QQQQ), 266–362 (MPMN…QQQQ), 394–419 (QQQQQQPQYHNGMPHHMQQHSPESMD), 454–476 (MHLQQQQQNQQNQQIQQQHQQIQ), and 528–621 (IQQQ…RRRT). 2 stretches are compositionally biased toward low complexity: residues 30-94 (QQQQ…NNNN) and 130-147 (QQQQQQQQQHYQQQQHPH). Residues 148 to 168 (QQQHPHQQQHPHQQQHPHQQQ) show a composition bias toward basic residues. Residues 169–180 (HPHQQQIQQQQQ) show a composition bias toward low complexity. Over residues 271-282 (GGNSRKNSFDMY) the composition is skewed to polar residues. Composition is skewed to low complexity over residues 283–322 (NNNNNNNNNNNINNNNNNNNNNNINNNNNNNNNNNNNNNI) and 340–362 (QHQQQHQQQQHQQQHQQQHQQQQ). 2 stretches are compositionally biased toward low complexity: residues 457–476 (QQQQQNQQNQQIQQQHQQIQ) and 528–549 (IQQQQQSIAKQQMPQQQNTPNN). Residues 550–569 (GSPSSSDGKSPVNSNTAITS) are compositionally biased toward polar residues. The span at 570-588 (NNNNNNNNNNNNNNNNNNN) shows a compositional bias: low complexity. A GATA-type zinc finger spans residues 631 to 656 (CHYCEVTETPEWRRGPDGDHTLCNAC). Positions 661-694 (AKSQKKLAREKELEKQKELEREKERENTRKHSID) form a coiled coil. Positions 667–693 (LAREKELEKQKELEREKERENTRKHSI) are enriched in basic and acidic residues. Residues 667–714 (LAREKELEKQKELEREKERENTRKHSIDFMLMNDTSSAPTNSQNPTPN) form a disordered region. Polar residues predominate over residues 699-714 (NDTSSAPTNSQNPTPN).

In Dictyostelium discoideum (Social amoeba), this protein is GATA zinc finger domain-containing protein 10 (gtaJ).